Here is a 350-residue protein sequence, read N- to C-terminus: MASEDKSKALAAALAQIEKQFGKGSIMRMSDNQITENLQVISTGSLTLDLALGVGGLPRGRVVEIYGPESSGKTTLCLQAVAEAQKLGGTCAYIDAENALDPVYAQKLGVNVEDLLISQPDTGEQALEICDMLVRSSGVDVIVVDSVAALVPKAEIEGEMGDSHVGLQARLMSQALRKLTGNIKRTNTLVIFINQIRMKIGVMFGNPETTTGGNALKFYASVRLDIRRTGGIKKGDEVIGNDTRVKVVKNKVSPPFRQADFEILYGEGISRQGEIIELGVKHGFIDKSGAWYAYNGQKIGQGKDNTREWLKANPAIADEIERKIREAVGVKIEINENQGDEEFADDAFDA.

G67–T74 lines the ATP pocket.

It belongs to the RecA family.

It localises to the cytoplasm. Functionally, can catalyze the hydrolysis of ATP in the presence of single-stranded DNA, the ATP-dependent uptake of single-stranded DNA by duplex DNA, and the ATP-dependent hybridization of homologous single-stranded DNAs. It interacts with LexA causing its activation and leading to its autocatalytic cleavage. In Chromobacterium violaceum (strain ATCC 12472 / DSM 30191 / JCM 1249 / CCUG 213 / NBRC 12614 / NCIMB 9131 / NCTC 9757 / MK), this protein is Protein RecA.